Consider the following 445-residue polypeptide: ATPase PAAT (445 aa).

A phosphoserine mark is found at serine 177, serine 182, serine 254, and serine 302. Residues 426–445 (PTGIPLRHYDSGERLSNGER) are disordered. The span at 432–445 (RHYDSGERLSNGER) shows a compositional bias: basic and acidic residues.

Homodimer. Interacts with ABCB7, ABCB8/MITOSUR and ABCB10.

Its subcellular location is the cytoplasm. The protein resides in the mitochondrion. The enzyme catalyses ATP + H2O = ADP + phosphate + H(+). ATPase that regulates mitochondrial ABC transporters ABCB7, ABCB8/MITOSUR and ABCB10. Regulates mitochondrial ferric concentration and heme biosynthesis and plays a role in the maintenance of mitochondrial homeostasis and cell survival. This Homo sapiens (Human) protein is ATPase PAAT.